The following is a 770-amino-acid chain: DEAD-box ATP-dependent RNA helicase 24 (770 aa).

Positions 1 to 106 (MSKRPKLGGF…ADSDDEDDPV (106 aa)) are disordered. A compositionally biased stretch (polar residues) spans 14–26 (RPTSYSFERSQPP). Positions 34 to 43 (DDPDLDDIAF) are enriched in acidic residues. Residues 44 to 55 (SDDAAAPSDAPP) are compositionally biased toward low complexity. Residues 219 to 247 (KSFADCGFPVQLMNAIAKQGYEKPTTIQC) carry the Q motif motif. In terms of domain architecture, Helicase ATP-binding spans 250-425 (LPIVLSGRDI…REILTDPIRV (176 aa)). Residue 263 to 270 (AKTGSGKT) coordinates ATP. Positions 373–376 (DEAD) match the DEAD box motif. Residues 436 to 599 (DIKQVVNVLP…DVPNELMDLA (164 aa)) enclose the Helicase C-terminal domain. Residues 604–613 (RFRANRDSRK) are compositionally biased toward basic and acidic residues. Disordered regions lie at residues 604–640 (RFRANRDSRKGGKKSGKGKGGGGGGGGGSGARGRGRG), 683–704 (VSASSSNTPSNSAPSRGAPSSF), and 729–770 (LPAP…GWDR). Gly residues predominate over residues 621-635 (GKGGGGGGGGGSGAR). Residues 683–697 (VSASSSNTPSNSAPS) show a composition bias toward low complexity. Over residues 744–753 (TVENANPNPE) the composition is skewed to polar residues. The span at 754-770 (SSRDRTRERKRPSGWDR) shows a compositional bias: basic and acidic residues.

It belongs to the DEAD box helicase family.

It catalyses the reaction ATP + H2O = ADP + phosphate + H(+). This is DEAD-box ATP-dependent RNA helicase 24 from Oryza sativa subsp. japonica (Rice).